We begin with the raw amino-acid sequence, 169 residues long: Keratin-associated protein 9-7 (169 aa).

17 tandem repeats follow at residues cysteine 8 to threonine 12, cysteine 13 to threonine 17, cysteine 32 to serine 36, cysteine 37 to serine 41, cysteine 46 to threonine 50, cysteine 51 to threonine 55, cysteine 56 to threonine 60, cysteine 61 to threonine 65, cysteine 75 to proline 79, cysteine 80 to isoleucine 84, cysteine 85 to serine 89, cysteine 90 to threonine 94, cysteine 100 to serine 104, cysteine 139 to alanine 143, cysteine 144 to threonine 148, cysteine 149 to threonine 153, and cysteine 163 to alanine 167. Residues cysteine 8 to alanine 167 are 17 X 5 AA repeats of C-C-[VGSREQH]-[SQTPN]-[STPAI].

The protein belongs to the KRTAP type 9 family. As to quaternary structure, interacts with hair keratins.

Its function is as follows. In the hair cortex, hair keratin intermediate filaments are embedded in an interfilamentous matrix, consisting of hair keratin-associated proteins (KRTAP), which are essential for the formation of a rigid and resistant hair shaft through their extensive disulfide bond cross-linking with abundant cysteine residues of hair keratins. The matrix proteins include the high-sulfur and high-glycine-tyrosine keratins. This is Keratin-associated protein 9-7 from Homo sapiens (Human).